Here is a 378-residue protein sequence, read N- to C-terminus: Erythronate-4-phosphate dehydrogenase (378 aa).

Substrate is bound by residues S45 and T66. NAD(+)-binding residues include D146 and T175. R208 is an active-site residue. An NAD(+)-binding site is contributed by D232. Residue E237 is part of the active site. Catalysis depends on H254, which acts as the Proton donor. An NAD(+)-binding site is contributed by G257. Y258 serves as a coordination point for substrate.

The protein belongs to the D-isomer specific 2-hydroxyacid dehydrogenase family. PdxB subfamily. Homodimer.

The protein resides in the cytoplasm. It carries out the reaction 4-phospho-D-erythronate + NAD(+) = (R)-3-hydroxy-2-oxo-4-phosphooxybutanoate + NADH + H(+). It participates in cofactor biosynthesis; pyridoxine 5'-phosphate biosynthesis; pyridoxine 5'-phosphate from D-erythrose 4-phosphate: step 2/5. Catalyzes the oxidation of erythronate-4-phosphate to 3-hydroxy-2-oxo-4-phosphonooxybutanoate. This is Erythronate-4-phosphate dehydrogenase from Klebsiella pneumoniae (strain 342).